We begin with the raw amino-acid sequence, 147 residues long: Endothelial differentiation-related factor 1 homolog (147 aa).

A disordered region spans residues 1–69 (MAESDWDTVT…KLDRETEELH (69 aa)). Over residues 33–42 (RRGEEVETSK) the composition is skewed to basic and acidic residues. Polar residues predominate over residues 46–58 (AGQNKQHTITRNT). Residues 59–69 (AKLDRETEELH) are compositionally biased toward basic and acidic residues. Residues 81–135 (IQQGRQGKGMTQKDLATKINEKPQVIADYECGKAIPNNQVMGKIERVIGLKLRGK) enclose the HTH cro/C1-type domain. Positions 92–111 (QKDLATKINEKPQVIADYEC) form a DNA-binding region, H-T-H motif.

The protein resides in the nucleus. Functionally, probable transcriptional coactivator. The protein is Endothelial differentiation-related factor 1 homolog (edf1) of Xenopus laevis (African clawed frog).